The following is a 310-amino-acid chain: 4-hydroxyproline 2-epimerase (310 aa).

C85 functions as the Proton acceptor in the catalytic mechanism. Residues 86-87 (GH), H205, and D231 contribute to the substrate site. The Proton donor role is filled by C235. 236-237 (GT) provides a ligand contact to substrate.

Belongs to the proline racemase family.

It carries out the reaction trans-4-hydroxy-L-proline = cis-4-hydroxy-D-proline. Functionally, catalyzes the epimerization of trans-4-hydroxy-L-proline (t4LHyp) to cis-4-hydroxy-D-proline (c4DHyp). May be involved in a degradation pathway of t4LHyp, which would allow L.aggregata to grow on t4LHyp as a sole carbon source. Displays no proline racemase activity. The sequence is that of 4-hydroxyproline 2-epimerase from Roseibium aggregatum (strain ATCC 25650 / DSM 13394 / JCM 20685 / NBRC 16684 / NCIMB 2208 / IAM 12614 / B1) (Stappia aggregata).